Consider the following 411-residue polypeptide: G1/S-specific cyclin pas1 (411 aa).

Disordered stretches follow at residues 210-253 (LKNQ…PSVL) and 307-326 (SLSK…VGVY). Residues 218–252 (PSSSPQTTQDSSPILTMAPSTPVSVGSTPPSTPSV) are compositionally biased toward low complexity.

This sequence belongs to the cyclin family.

Functionally, essential for the control of the cell cycle at the G1/S (start) transition. Interacts with the pef1 protein kinase. The pef1/pas1 complex activates the res2/cdc10 complex. In Schizosaccharomyces pombe (strain 972 / ATCC 24843) (Fission yeast), this protein is G1/S-specific cyclin pas1 (pas1).